The primary structure comprises 426 residues: Glutamate/glutamine/aspartate/asparagine transport system permease protein BztB (426 aa).

8 helical membrane passes run S25–N45, L96–L116, V132–A152, L211–W231, W252–F272, S293–V313, S340–L360, and M396–L416. The ABC transmembrane type-1 domain maps to L92–M414.

Belongs to the binding-protein-dependent transport system permease family. HisMQ subfamily. BztB and BztC form a heterodimer which can form a membrane complex with a homodimer of BztD.

It localises to the cell inner membrane. Its function is as follows. Part of a binding-protein-dependent transport system for glutamate, glutamine, aspartate and asparagine. Probably responsible for the translocation of the substrate across the membrane. This Rhodobacter capsulatus (strain ATCC BAA-309 / NBRC 16581 / SB1003) protein is Glutamate/glutamine/aspartate/asparagine transport system permease protein BztB (bztB).